The sequence spans 315 residues: Olfactory receptor 3A2 (315 aa).

Topologically, residues M1 to V29 are extracellular. A glycan (N-linked (GlcNAc...) asparagine) is linked at N8. A helical membrane pass occupies residues V30–I52. Residues L53–A60 lie on the Cytoplasmic side of the membrane. A helical membrane pass occupies residues P61–P82. Residues A83–Q103 lie on the Extracellular side of the membrane. C100 and C192 form a disulfide bridge. A helical transmembrane segment spans residues L104 to Y123. The Cytoplasmic segment spans residues D124–V143. A helical transmembrane segment spans residues Q144–T161. Topologically, residues H162 to E199 are extracellular. Residues L200–H223 form a helical membrane-spanning segment. Topologically, residues V224 to A240 are cytoplasmic. The chain crosses the membrane as a helical span at residues F241 to R264. Topologically, residues L265–K275 are extracellular. A helical transmembrane segment spans residues G276 to L295. Residues R296 to T315 lie on the Cytoplasmic side of the membrane.

This sequence belongs to the G-protein coupled receptor 1 family.

The protein localises to the cell membrane. Odorant receptor. The polypeptide is Olfactory receptor 3A2 (OR3A2) (Pan troglodytes (Chimpanzee)).